A 231-amino-acid polypeptide reads, in one-letter code: Probable methylthioribulose-1-phosphate dehydratase (231 aa).

Cys90 is a substrate binding site. Residues His108 and His110 each contribute to the Zn(2+) site. Glu132 acts as the Proton donor/acceptor in catalysis. His188 contributes to the Zn(2+) binding site.

Belongs to the aldolase class II family. MtnB subfamily. It depends on Zn(2+) as a cofactor.

It is found in the cytoplasm. It catalyses the reaction 5-(methylsulfanyl)-D-ribulose 1-phosphate = 5-methylsulfanyl-2,3-dioxopentyl phosphate + H2O. Its pathway is amino-acid biosynthesis; L-methionine biosynthesis via salvage pathway; L-methionine from S-methyl-5-thio-alpha-D-ribose 1-phosphate: step 2/6. In terms of biological role, catalyzes the dehydration of methylthioribulose-1-phosphate (MTRu-1-P) into 2,3-diketo-5-methylthiopentyl-1-phosphate (DK-MTP-1-P). The sequence is that of Probable methylthioribulose-1-phosphate dehydratase from Anopheles gambiae (African malaria mosquito).